Consider the following 304-residue polypeptide: Plasmodesmata-located protein 3 (304 aa).

The N-terminal stretch at 1 to 26 is a signal peptide; it reads MGFYSLKQLLLLYIIIMALFSDLKLA. Over 27-272 the chain is Extracellular; that stretch reads KSSSPEYTNL…SSSSGTTGKT (246 aa). Gnk2-homologous domains are found at residues 34-138 and 143-242; these read TNLI…ISGF and GMEL…FYPN. 6 cysteine pairs are disulfide-bonded: Cys-41–Cys-116, Cys-92–Cys-101, Cys-104–Cys-129, Cys-151–Cys-220, Cys-196–Cys-205, and Cys-208–Cys-233. A helical transmembrane segment spans residues 273–293; sequence VAIIVGGTAGVGFLVICLLFV. The tract at residues 273-293 is necessary and sufficient for plasmodesmal targeting; the sequence is VAIIVGGTAGVGFLVICLLFV. Over 294-304 the chain is Cytoplasmic; that stretch reads KNLMKKKYDDY.

This sequence belongs to the cysteine-rich repeat secretory protein family. Plasmodesmata-located proteins (PDLD) subfamily. (Microbial infection) Interacts with Grapevine fanleaf virus (GFLV) 2B-MP. In terms of tissue distribution, highly expressed in inflorescence pedacel and shoot apex. Expressed in the outermost L1 layer of the shoot apical meristem and in the epidermis of bulging floral primordia. Within the L1, expression was restricted to the peripheral zone (at protein level).

The protein resides in the cell membrane. The protein localises to the cell junction. It is found in the plasmodesma. Its function is as follows. Modulates cell-to-cell trafficking. The sequence is that of Plasmodesmata-located protein 3 from Arabidopsis thaliana (Mouse-ear cress).